The following is a 234-amino-acid chain: Probable glycerol uptake facilitator protein (234 aa).

The next 2 helical transmembrane spans lie at 3–23 (VYLAEFLGTMLLIILGDGVVA) and 36–56 (GWIVITTGWGLAVAMSVYLVG). Positions 64 to 66 (NPA) match the NPA 1 motif. The next 3 helical transmembrane spans lie at 82–102 (VPGYIFSQILGAFVGAILVYL), 134–154 (LLTEIIGTMVLLMGVLGIGAN), and 164–184 (LVGFLVWSIGLSLGGPTGYAI). The short motif at 185–187 (NPA) is the NPA 2 element. A helical membrane pass occupies residues 214–234 (VPIIGPIIGGILGASLYNWLF).

The protein belongs to the MIP/aquaporin (TC 1.A.8) family.

The protein resides in the cell membrane. The catalysed reaction is glycerol(in) = glycerol(out). Mediates glycerol diffusion across the cytoplasmic membrane via a pore-type mechanism. The polypeptide is Probable glycerol uptake facilitator protein (glpF) (Thermotoga maritima (strain ATCC 43589 / DSM 3109 / JCM 10099 / NBRC 100826 / MSB8)).